The primary structure comprises 121 residues: Small ribosomal subunit protein uS13 (121 aa).

The segment at 94-121 (GLPVRGQNTKNNARTRKGPRRTVANKKK) is disordered. A compositionally biased stretch (basic residues) spans 106–121 (ARTRKGPRRTVANKKK).

The protein belongs to the universal ribosomal protein uS13 family. Part of the 30S ribosomal subunit. Forms a loose heterodimer with protein S19. Forms two bridges to the 50S subunit in the 70S ribosome.

Its function is as follows. Located at the top of the head of the 30S subunit, it contacts several helices of the 16S rRNA. In the 70S ribosome it contacts the 23S rRNA (bridge B1a) and protein L5 of the 50S subunit (bridge B1b), connecting the 2 subunits; these bridges are implicated in subunit movement. Contacts the tRNAs in the A and P-sites. This is Small ribosomal subunit protein uS13 from Anoxybacillus flavithermus (strain DSM 21510 / WK1).